The chain runs to 192 residues: Potassium-transporting ATPase KdpC subunit (192 aa).

Residues 7-27 (PLIVLFVVLAALTGLAYPAVM) traverse the membrane as a helical segment.

This sequence belongs to the KdpC family. In terms of assembly, the system is composed of three essential subunits: KdpA, KdpB and KdpC.

Its subcellular location is the cell inner membrane. Part of the high-affinity ATP-driven potassium transport (or Kdp) system, which catalyzes the hydrolysis of ATP coupled with the electrogenic transport of potassium into the cytoplasm. This subunit acts as a catalytic chaperone that increases the ATP-binding affinity of the ATP-hydrolyzing subunit KdpB by the formation of a transient KdpB/KdpC/ATP ternary complex. The chain is Potassium-transporting ATPase KdpC subunit from Paraburkholderia xenovorans (strain LB400).